Consider the following 525-residue polypeptide: GMP synthase [glutamine-hydrolyzing] (525 aa).

One can recognise a Glutamine amidotransferase type-1 domain in the interval 12-203; that stretch reads TVLVVDFGAQ…LYRGAGLTPS (192 aa). Catalysis depends on cysteine 89, which acts as the Nucleophile. Active-site residues include histidine 177 and glutamate 179. The GMPS ATP-PPase domain maps to 204 to 399; it reads WTTGNVIDEQ…LGLPDEIVQR (196 aa). 231–237 is a binding site for ATP; sequence SGGVDSA.

Homodimer.

The catalysed reaction is XMP + L-glutamine + ATP + H2O = GMP + L-glutamate + AMP + diphosphate + 2 H(+). Its pathway is purine metabolism; GMP biosynthesis; GMP from XMP (L-Gln route): step 1/1. Its function is as follows. Catalyzes the synthesis of GMP from XMP. The protein is GMP synthase [glutamine-hydrolyzing] of Streptomyces avermitilis (strain ATCC 31267 / DSM 46492 / JCM 5070 / NBRC 14893 / NCIMB 12804 / NRRL 8165 / MA-4680).